The chain runs to 422 residues: UPF0229 protein Spro_2732 (422 aa).

A compositionally biased stretch (basic and acidic residues) spans 77–90 (PGNDHFVQNDRVER). A disordered region spans residues 77 to 109 (PGNDHFVQNDRVERPQGGGGGGSGQGNASQDGE). The segment covering 92–101 (QGGGGGGSGQ) has biased composition (gly residues).

This sequence belongs to the UPF0229 family.

This Serratia proteamaculans (strain 568) protein is UPF0229 protein Spro_2732.